The chain runs to 317 residues: Retinol dehydrogenase 16 (317 aa).

33-57 (FITGCDSGFGKLLARQLDARGLRVL) contributes to the NAD(+) binding site. Position 164 (S164) interacts with substrate. Residue Y176 is the Proton acceptor of the active site. The helical transmembrane segment at 289-309 (LLYLPMSYMPTFLVDAIMYWV) threads the bilayer.

It belongs to the short-chain dehydrogenases/reductases (SDR) family. In terms of assembly, homodimer. Post-translationally, not N-glycosylated. Highly expressed in adult liver (at protein level). Detected in endometrium, liver and foreskin. Detected in the spineous layers of adult skin, and at lower levels in basal and granular skin layers. Detected in fetal liver and lung.

The protein resides in the microsome membrane. Its subcellular location is the endoplasmic reticulum membrane. It catalyses the reaction all-trans-retinol--[retinol-binding protein] + NAD(+) = all-trans-retinal--[retinol-binding protein] + NADH + H(+). It carries out the reaction all-trans-retinol + NAD(+) = all-trans-retinal + NADH + H(+). The enzyme catalyses 13-cis-retinol + NAD(+) = 13-cis-retinal + NADH + H(+). The catalysed reaction is 11-cis-retinol + NAD(+) = 11-cis-retinal + NADH + H(+). It catalyses the reaction 9-cis-retinol + NAD(+) = 9-cis-retinal + NADH + H(+). It carries out the reaction 5alpha-androstane-3alpha,17beta-diol + NAD(+) = 17beta-hydroxy-5alpha-androstan-3-one + NADH + H(+). The enzyme catalyses androsterone + NAD(+) = 5alpha-androstan-3,17-dione + NADH + H(+). The protein operates within cofactor metabolism; retinol metabolism. With respect to regulation, inhibited by citral, perillyl alcohol, geraniol, farnesol and geranyl geraniol. Functionally, oxidoreductase with a preference for NAD. Oxidizes all-trans-retinol, 9-cis-retinol, 11-cis-retinol and 13-cis-retinol to the corresponding aldehydes. Has higher activity towards CRBP-bound retinol than with free retinol. Also oxidizes 3-alpha-hydroxysteroids. Oxidizes androstanediol and androsterone to dihydrotestosterone and androstanedione. Can also catalyze the reverse reaction. The chain is Retinol dehydrogenase 16 from Homo sapiens (Human).